A 71-amino-acid polypeptide reads, in one-letter code: Brevinin-1CG4 (71 aa).

A signal peptide spans 1–22 (MFTLKKSLLLLFFLGTINLSLC). A propeptide spans 23-45 (EQERNADEEERRDDSDKRDVEVE) (removed in mature form). Residues Cys-65 and Cys-71 are joined by a disulfide bond.

It belongs to the frog skin active peptide (FSAP) family. Brevinin subfamily. In terms of tissue distribution, expressed by the skin glands.

It localises to the secreted. Antimicrobial peptide active against a variety of Gram-positive and some Gram-negative bacterial strains. Has antifungal activity against C.albicans ATCC 10231 and a slime mold isolate. Has hemolytic activity against human erythrocytes. The protein is Brevinin-1CG4 of Amolops chunganensis (Chungan torrent frog).